A 356-amino-acid polypeptide reads, in one-letter code: Protein RecA (356 aa).

Position 68 to 75 (68 to 75) interacts with ATP; it reads GPESSGKT.

It belongs to the RecA family.

Its subcellular location is the cytoplasm. Can catalyze the hydrolysis of ATP in the presence of single-stranded DNA, the ATP-dependent uptake of single-stranded DNA by duplex DNA, and the ATP-dependent hybridization of homologous single-stranded DNAs. It interacts with LexA causing its activation and leading to its autocatalytic cleavage. The sequence is that of Protein RecA from Clostridium botulinum (strain Alaska E43 / Type E3).